A 426-amino-acid polypeptide reads, in one-letter code: Arrestin domain-containing protein 17 (426 aa).

The span at 320 to 329 shows a compositional bias: polar residues; that stretch reads QSAGNGSLPK. The interval 320 to 340 is disordered; that stretch reads QSAGNGSLPKSSIKDSPPKWD. The span at 331–340 shows a compositional bias: basic and acidic residues; sequence SIKDSPPKWD.

The protein belongs to the arrestin family. As to quaternary structure, interacts with tax-6. Phosphorylated. Dephosphorylated by tax-6 in vitro. In terms of tissue distribution, expressed from the comma stage to adulthood in the nervous system, including sensory neurons and interneurons posterior to the nerve ring, dorsal and ventral nerve cords, tail ganglia and, CEP, HSN, ASK, ADL, ASH and ASJ neurons.

Functionally, involved in several behavioral responses including chemotaxis towards lysine and adaptation to repeated osmotic stress. In addition, plays a role in resuming egg-laying and locomotion after starvation. The polypeptide is Arrestin domain-containing protein 17 (Caenorhabditis elegans).